We begin with the raw amino-acid sequence, 214 residues long: Large ribosomal subunit protein uL6m (214 aa).

The N-terminal 16 residues, 1–16 (MSFIQRRLLSQTLFLR), are a transit peptide targeting the mitochondrion.

This sequence belongs to the universal ribosomal protein uL6 family. As to quaternary structure, component of the mitochondrial large ribosomal subunit (mt-LSU). Mature yeast 74S mitochondrial ribosomes consist of a small (37S) and a large (54S) subunit. The 37S small subunit contains a 15S ribosomal RNA (15S mt-rRNA) and 34 different proteins. The 54S large subunit contains a 21S rRNA (21S mt-rRNA) and 46 different proteins.

The protein localises to the mitochondrion. In terms of biological role, component of the mitochondrial ribosome (mitoribosome), a dedicated translation machinery responsible for the synthesis of mitochondrial genome-encoded proteins, including at least some of the essential transmembrane subunits of the mitochondrial respiratory chain. The mitoribosomes are attached to the mitochondrial inner membrane and translation products are cotranslationally integrated into the membrane. This is Large ribosomal subunit protein uL6m (MRPL6) from Saccharomyces cerevisiae (strain ATCC 204508 / S288c) (Baker's yeast).